Consider the following 332-residue polypeptide: NADH-quinone oxidoreductase subunit H (332 aa).

9 helical membrane passes run 4-24 (FAFF…IFAS), 44-64 (IGPD…MIKL), 78-98 (FIFA…LAAI), 120-140 (VALL…FLGG), 165-185 (VGAL…LVDI), 194-214 (FSWL…ALFI), 255-275 (IAGA…FWII), 279-299 (IMMI…RAAF), and 312-332 (YLIL…TVLL).

It belongs to the complex I subunit 1 family. NDH-1 is composed of 14 different subunits. Subunits NuoA, H, J, K, L, M, N constitute the membrane sector of the complex.

The protein resides in the cell inner membrane. It carries out the reaction a quinone + NADH + 5 H(+)(in) = a quinol + NAD(+) + 4 H(+)(out). NDH-1 shuttles electrons from NADH, via FMN and iron-sulfur (Fe-S) centers, to quinones in the respiratory chain. The immediate electron acceptor for the enzyme in this species is believed to be ubiquinone. Couples the redox reaction to proton translocation (for every two electrons transferred, four hydrogen ions are translocated across the cytoplasmic membrane), and thus conserves the redox energy in a proton gradient. This subunit may bind ubiquinone. This Campylobacter jejuni subsp. jejuni serotype O:23/36 (strain 81-176) protein is NADH-quinone oxidoreductase subunit H.